The following is a 344-amino-acid chain: C-C chemokine receptor-like 2 (344 aa).

The Extracellular segment spans residues methionine 1–serine 43. The N-linked (GlcNAc...) asparagine glycan is linked to asparagine 3. The chain crosses the membrane as a helical span at residues leucine 44 to valine 64. At lysine 65–asparagine 74 the chain is on the cytoplasmic side. The helical transmembrane segment at isoleucine 75–alanine 95 threads the bilayer. At histidine 96–lysine 104 the chain is on the extracellular side. A disulfide bridge connects residues cysteine 103 and cysteine 181. Residues isoleucine 105–threonine 125 traverse the membrane as a helical segment. Residues valine 126 to arginine 144 lie on the Cytoplasmic side of the membrane. The chain crosses the membrane as a helical span at residues valine 145–proline 165. The Extracellular portion of the chain corresponds to glutamate 166 to histidine 198. Residues phenylalanine 199–leucine 219 form a helical membrane-spanning segment. Topologically, residues tyrosine 220–lysine 238 are cytoplasmic. Residues leucine 239–phenylalanine 259 traverse the membrane as a helical segment. Topologically, residues leucine 260–lysine 286 are extracellular. A helical membrane pass occupies residues leucine 287–phenylalanine 307. Over serine 308 to valine 344 the chain is Cytoplasmic. Residues glutamine 324 to threonine 333 show a composition bias toward polar residues. The disordered stretch occupies residues glutamine 324 to valine 344. Over residues serine 334–valine 344 the composition is skewed to basic and acidic residues.

The protein belongs to the G-protein coupled receptor 1 family. As to expression, expressed abundantly in immunal tissues such as spleen, fetal liver, lymph node and bone marrow. Strong expression also in lung and heart. Expressed in almost all hematopoietic cells including monocytes, macrophages, PMNs, T-cells (both CD4+ and CD8+), monocyte-derived iDCs, NK cells, and CD34+ progenitor cells. B-cells expressed isoform 1 but not isoform 2. Up-regulated on synovial neutrophils of rheumatoid arthritis patients.

It localises to the cell membrane. Its function is as follows. Receptor for CCL19 and chemerin/RARRES2. Does not appear to be a signaling receptor, but may have a role in modulating chemokine-triggered immune responses by capturing and internalizing CCL19 or by presenting RARRES2 ligand to CMKLR1, a functional signaling receptors. Plays a critical role for the development of Th2 responses. The chain is C-C chemokine receptor-like 2 (CCRL2) from Homo sapiens (Human).